A 201-amino-acid chain; its full sequence is UPF0301 protein Rleg2_0617 (201 aa).

It belongs to the UPF0301 (AlgH) family.

The sequence is that of UPF0301 protein Rleg2_0617 from Rhizobium leguminosarum bv. trifolii (strain WSM2304).